A 320-amino-acid chain; its full sequence is Nuclease (320 aa).

The active-site Proton acceptor is the His-155. A Mg(2+)-binding site is contributed by Asn-187. Asn-204 carries an N-linked (GlcNAc...) asparagine glycan. Cys-312 and Cys-317 are disulfide-bonded.

It belongs to the DNA/RNA non-specific endonuclease family. In terms of assembly, homodimer; as a result of non-covalent interactions and not through the disulfide linkages between the two monomers. The cofactor is Mg(2+). Mn(2+) serves as cofactor. Glycosylated.

It is found in the secreted. In terms of biological role, this enzyme has both RNase and DNase activity. This chain is Nuclease, found in Syncephalastrum racemosum (Filamentous fungus).